The primary structure comprises 373 residues: Gibberellin 3-beta-dioxygenase 2 (373 aa).

The Fe2OG dioxygenase domain occupies 203–304 (MTATVHLNWY…RVSLGYFLGP (102 aa)). Position 212 (Tyr212) interacts with 2-oxoglutarate. Fe cation is bound by residues His227, Asp229, and His285. 2-oxoglutarate is bound by residues Arg295 and Ser297.

The protein belongs to the iron/ascorbate-dependent oxidoreductase family. Requires L-ascorbate as cofactor. Fe(2+) is required as a cofactor. Highly expressed in elongating leaves. Expressed in unopened flowers. Expressed at low levels in leaf blades, shoots, rachis, stems and young panicles.

The catalysed reaction is gibberellin A20 + 2-oxoglutarate + O2 = gibberellin A1 + succinate + CO2. Its pathway is plant hormone biosynthesis; gibberellin biosynthesis. In terms of biological role, catalyzes the 3-beta-hydroxylation of the inactive gibberellin precursors, leading to the formation of bioactive gibberellins. In vitro, converts the precursors GA20, GA5, GA44 and GA9 to the corresponding 3-beta-hydroxylated active products GA1, GA3, GA38 and GA4, respectively. Involved in the production of bioactive GA for vegetative growth and development. Controls the elongation of the vegetative shoot and plant height by the regulation of active gibberellin levels. The sequence is that of Gibberellin 3-beta-dioxygenase 2 from Oryza sativa subsp. japonica (Rice).